The sequence spans 393 residues: ATP phosphoribosyltransferase regulatory subunit (393 aa).

Belongs to the class-II aminoacyl-tRNA synthetase family. HisZ subfamily. As to quaternary structure, heteromultimer composed of HisG and HisZ subunits.

Its subcellular location is the cytoplasm. It participates in amino-acid biosynthesis; L-histidine biosynthesis; L-histidine from 5-phospho-alpha-D-ribose 1-diphosphate: step 1/9. Required for the first step of histidine biosynthesis. May allow the feedback regulation of ATP phosphoribosyltransferase activity by histidine. The polypeptide is ATP phosphoribosyltransferase regulatory subunit (Chromohalobacter salexigens (strain ATCC BAA-138 / DSM 3043 / CIP 106854 / NCIMB 13768 / 1H11)).